Consider the following 364-residue polypeptide: Nucleosome assembly protein 1;2 (364 aa).

Residues 32 to 86 (VESIKNTLQGLAARHTDVLESLEPKVRKRVEVLREIQSQHDDLEAKFFEERAALE) adopt a coiled-coil conformation. A Nuclear export signal motif is present at residues 53–68 (LEPKVRKRVEVLREIQ). Positions 227 to 232 (KKKPKK) match the Nuclear localization signal motif. Disordered stretches follow at residues 250-269 (FNFF…DEDT) and 301-364 (GEAA…CKQQ). Composition is skewed to acidic residues over residues 259–269 (PDDDEEIDEDT) and 304–340 (AQDE…DDED). Cys-361 is modified (cysteine methyl ester). The S-farnesyl cysteine moiety is linked to residue Cys-361. Residues 362-364 (KQQ) constitute a propeptide, removed in mature form.

This sequence belongs to the nucleosome assembly protein (NAP) family.

The protein resides in the nucleus. Its subcellular location is the cytoplasm. May modulate chromatin structure by regulation of nucleosome assembly/disassembly. The protein is Nucleosome assembly protein 1;2 (NAP1;2) of Oryza sativa subsp. japonica (Rice).